We begin with the raw amino-acid sequence, 115 residues long: Ubiquitin-related modifier 1 (115 aa).

Residue Gly115 is modified to 1-thioglycine. Gly115 is covalently cross-linked (Glycyl lysine isopeptide (Gly-Lys) (interchain with K-? in acceptor proteins)).

Belongs to the URM1 family. C-terminal thiocarboxylation occurs in 2 steps, it is first acyl-adenylated (-COAMP) via the hesA/moeB/thiF part of UBA4, then thiocarboxylated (-COSH) via the rhodanese domain of UBA4.

The protein localises to the cytoplasm. It participates in tRNA modification; 5-methoxycarbonylmethyl-2-thiouridine-tRNA biosynthesis. Its function is as follows. Acts as a sulfur carrier required for 2-thiolation of mcm(5)S(2)U at tRNA wobble positions of cytosolic tRNA(Lys), tRNA(Glu) and tRNA(Gln). Serves as sulfur donor in tRNA 2-thiolation reaction by being thiocarboxylated (-COSH) at its C-terminus by the MOCS3 homolog UBA4. The sulfur is then transferred to tRNA to form 2-thiolation of mcm(5)S(2)U. Prior mcm(5) tRNA modification by the elongator complex is required for 2-thiolation. Also acts as a ubiquitin-like protein (UBL) that is covalently conjugated via an isopeptide bond to lysine residues of target proteins such as AHP1. The thiocarboxylated form serves as substrate for conjugation and oxidative stress specifically induces the formation of UBL-protein conjugates. The protein is Ubiquitin-related modifier 1 of Coccidioides immitis (strain RS) (Valley fever fungus).